A 46-amino-acid chain; its full sequence is Homeobox protein Hox-D4 (46 aa).

The segment at residues 1–46 (VNSNYTGGEPKRSRTAYTRQQVLELEKEFLFNRYLTRRRRIQHTLT) is a DNA-binding region (homeobox).

It belongs to the Antp homeobox family. Deformed subfamily. In terms of assembly, forms a DNA-binding heterodimer with transcription factor PBX1.

It is found in the nucleus. Functionally, sequence-specific transcription factor which is part of a developmental regulatory system that provides cells with specific positional identities on the anterior-posterior axis. The protein is Homeobox protein Hox-D4 (HOXD4) of Ovis aries (Sheep).